Consider the following 334-residue polypeptide: Aspartate carbamoyltransferase catalytic subunit (334 aa).

Carbamoyl phosphate-binding residues include R71 and T72. K99 contacts L-aspartate. Residues R121, H151, and Q154 each coordinate carbamoyl phosphate. 2 residues coordinate L-aspartate: R184 and R239. Carbamoyl phosphate is bound by residues G280 and P281.

The protein belongs to the aspartate/ornithine carbamoyltransferase superfamily. ATCase family. Heterododecamer (2C3:3R2) of six catalytic PyrB chains organized as two trimers (C3), and six regulatory PyrI chains organized as three dimers (R2).

It carries out the reaction carbamoyl phosphate + L-aspartate = N-carbamoyl-L-aspartate + phosphate + H(+). It participates in pyrimidine metabolism; UMP biosynthesis via de novo pathway; (S)-dihydroorotate from bicarbonate: step 2/3. In terms of biological role, catalyzes the condensation of carbamoyl phosphate and aspartate to form carbamoyl aspartate and inorganic phosphate, the committed step in the de novo pyrimidine nucleotide biosynthesis pathway. In Pseudomonas putida (strain ATCC 47054 / DSM 6125 / CFBP 8728 / NCIMB 11950 / KT2440), this protein is Aspartate carbamoyltransferase catalytic subunit.